A 347-amino-acid polypeptide reads, in one-letter code: Ryncolin-2 (347 aa).

The signal sequence occupies residues methionine 1–glycine 19. The disordered stretch occupies residues leucine 49–aspartate 115. Positions glycine 57–glycine 114 constitute a Collagen-like domain. Residues lysine 95–aspartate 115 are compositionally biased toward basic and acidic residues. Residues aspartate 121–glutamine 341 enclose the Fibrinogen C-terminal domain. 2 cysteine pairs are disulfide-bonded: cysteine 132-cysteine 160 and cysteine 284-cysteine 297.

This sequence belongs to the ficolin lectin family. Veficolin subfamily. In terms of processing, hydroxylated, possibly at Pro-74 and Pro-94. In terms of tissue distribution, expressed by the venom duct.

The protein resides in the secreted. Initiates complement activation and/or interferes in platelet aggregation and/or blood coagulation. The chain is Ryncolin-2 from Cerberus rynchops (Dog-faced water snake).